The following is a 35-amino-acid chain: MLTKFETKSARVKGLSFHPKRPWILTSLHNGVIQL.

Oligomeric complex that consists of at least the alpha, beta, beta', gamma, delta, epsilon and zeta subunits. Interacts with SCYL1. Interacts with JAGN1. Interacts with TMEM41B. Interacts with SVEP1. Probably interacts with PEX11A. Gastric, duodenal and jejunal mucosa. Circulates in the blood. Seems to be confined to specific endocrine cells.

In terms of biological role, xenin stimulates exocrine pancreatic secretion. It inhibits pentagastrin-stimulated secretion of acid, to induce exocrine pancreatic secretion and to affect small and large intestinal motility. In the gut, xenin interacts with the neurotensin receptor. This Canis lupus familiaris (Dog) protein is Coatomer subunit alpha (COPA).